The sequence spans 50 residues: Sproutin (50 aa).

Ser8 bears the Phosphoserine; by PKC mark.

As to expression, brain.

Its function is as follows. Neurite outgrowth factor. This chain is Sproutin, found in Rattus norvegicus (Rat).